The following is a 119-amino-acid chain: Large ribosomal subunit protein uL14 (119 aa).

Belongs to the universal ribosomal protein uL14 family. In terms of assembly, part of the 50S ribosomal subunit. Forms a cluster with proteins L3 and L19. In the 70S ribosome, L14 and L19 interact and together make contacts with the 16S rRNA in bridges B5 and B8.

Functionally, binds to 23S rRNA. Forms part of two intersubunit bridges in the 70S ribosome. This chain is Large ribosomal subunit protein uL14, found in Ehrlichia ruminantium (strain Gardel).